Consider the following 291-residue polypeptide: Verruculogen synthase (291 aa).

It belongs to the PhyH family. In terms of assembly, homodimer. The cofactor is Fe cation.

The enzyme catalyses fumitremorgin B + 2-oxoglutarate + AH2 + 2 O2 = verruculogen + succinate + A + CO2 + H2O. Its pathway is mycotoxin biosynthesis. Its function is as follows. Verruculogen synthase; part of the gene cluster that mediates the biosynthesis of fumitremorgins, indole alkaloids that carry not only intriguing chemical structures, but also interesting biological and pharmacological activities. The biosynthesis of fumitremorgin-type alkaloids begins by condensation of the two amino acids L-tryptophan and L-proline to brevianamide F, catalyzed by the non-ribosomal peptide synthetase ftmPS/ftmA. Brevianamide F is then prenylated by the prenyltransferase ftmPT1/ftmB in the presence of dimethylallyl diphosphate, resulting in the formation of tryprostatin B. The three cytochrome P450 monooxygenases, ftmP450-1/ftmC, ftmP450-2/ftmE and ftmP450-3/FtmG, are responsible for the conversion of tryprostatin B to 6-hydroxytryprostatin B, tryprostatin A to fumitremorgin C and fumitremorgin C to 12,13-dihydroxyfumitremorgin C, respectively. The putative methyltransferase ftmMT/ftmD is expected for the conversion of 6-hydroxytryprostatin B to tryprostatin A. FtmPT2/FtmH catalyzes the prenylation of 12,13-dihydroxyfumitre-morgin C in the presence of dimethylallyl diphosphate, resulting in the formation of fumitremorgin B. Fumitremorgin B is further converted to verruculogen by ftmOx1/ftmF via the insertion of an endoperoxide bond between the two prenyl moieties. Finally, verruculogen is further converted to fumitremorgin A by the verruculogen prenyltransferase ftmPT3. This Neosartorya fischeri (strain ATCC 1020 / DSM 3700 / CBS 544.65 / FGSC A1164 / JCM 1740 / NRRL 181 / WB 181) (Aspergillus fischerianus) protein is Verruculogen synthase.